A 225-amino-acid chain; its full sequence is UPF0128 protein PH1314 (225 aa).

The protein belongs to the UPF0128 family.

This is UPF0128 protein PH1314 from Pyrococcus horikoshii (strain ATCC 700860 / DSM 12428 / JCM 9974 / NBRC 100139 / OT-3).